Here is a 1691-residue protein sequence, read N- to C-terminus: Protein TIC 214 (1691 aa).

The next 6 membrane-spanning stretches (helical) occupy residues 19–39 (MLLG…SQIL), 60–80 (VLAQ…LLLL), 84–104 (LLTI…KDFP), 123–143 (LFLI…NSVL), 158–178 (TVFM…FNFF), and 200–220 (FIYA…LGRA). The interval 819 to 839 (EKQHTLQRKHKEIGSKSRELK) is disordered.

It belongs to the TIC214 family. In terms of assembly, part of the Tic complex.

The protein resides in the plastid. The protein localises to the chloroplast inner membrane. Involved in protein precursor import into chloroplasts. May be part of an intermediate translocation complex acting as a protein-conducting channel at the inner envelope. The polypeptide is Protein TIC 214 (Adiantum capillus-veneris (Maidenhair fern)).